The chain runs to 103 residues: Large ribosomal subunit protein eL14 (103 aa).

The protein belongs to the eukaryotic ribosomal protein eL14 family.

In Pyrobaculum arsenaticum (strain DSM 13514 / JCM 11321 / PZ6), this protein is Large ribosomal subunit protein eL14.